Consider the following 1028-residue polypeptide: Pentatricopeptide repeat-containing protein At3g09040, mitochondrial (1028 aa).

A mitochondrion-targeting transit peptide spans 1–30 (MYFRVLLTPSSAMFDSFSFVRRLSYSPDLG). 24 PPR repeats span residues 94 to 123 (EGRL…FLEK), 124 to 158 (DVTA…QIFP), 159 to 193 (NKFT…GLER), 194 to 224 (NSYC…IVDP), 225 to 259 (NTVC…GHRP), 260 to 290 (DHLA…MSSP), 291 to 325 (DVVA…SVKS), 326 to 360 (TRST…GLAS), 361 to 391 (NIYV…LEEK), 392 to 426 (NDVF…GYNI), 427 to 461 (DDFT…KLAK), 462 to 492 (NLFV…MCDR), 493 to 527 (DNVT…GIVS), 528 to 562 (DGAC…GLDR), 563 to 593 (DLHT…LPEW), 594 to 627 (SVVS…GVNP), 628 to 662 (SEIT…GFSS), 664 to 694 (GEYL…LSSP), 696 to 730 (SIVL…GVLP), 731 to 765 (DQAT…AHDL), 766 to 796 (DELT…MRRR), 798 to 832 (NVVS…HIMP), 833 to 863 (DEIT…MIGQ), and 869 to 899 (RVDH…QNLK). The segment at 904–979 (LWSSLLGACR…VPGYSWIDVE (76 aa)) is type E motif. A type E(+) motif region spans residues 980 to 1010 (QRTHIFAAGDKSHSEIGKIEMFLEDLYDLMK).

It belongs to the PPR family. PCMP-E subfamily.

It localises to the mitochondrion. This chain is Pentatricopeptide repeat-containing protein At3g09040, mitochondrial (PCMP-E88), found in Arabidopsis thaliana (Mouse-ear cress).